A 422-amino-acid polypeptide reads, in one-letter code: 4-hydroxy-3-methylbut-2-en-1-yl diphosphate synthase (flavodoxin) (422 aa).

Residues cysteine 316, cysteine 319, cysteine 362, and glutamate 369 each coordinate [4Fe-4S] cluster.

Belongs to the IspG family. [4Fe-4S] cluster serves as cofactor.

The enzyme catalyses (2E)-4-hydroxy-3-methylbut-2-enyl diphosphate + oxidized [flavodoxin] + H2O + 2 H(+) = 2-C-methyl-D-erythritol 2,4-cyclic diphosphate + reduced [flavodoxin]. The protein operates within isoprenoid biosynthesis; isopentenyl diphosphate biosynthesis via DXP pathway; isopentenyl diphosphate from 1-deoxy-D-xylulose 5-phosphate: step 5/6. In terms of biological role, converts 2C-methyl-D-erythritol 2,4-cyclodiphosphate (ME-2,4cPP) into 1-hydroxy-2-methyl-2-(E)-butenyl 4-diphosphate. The sequence is that of 4-hydroxy-3-methylbut-2-en-1-yl diphosphate synthase (flavodoxin) from Ehrlichia canis (strain Jake).